Reading from the N-terminus, the 142-residue chain is Putative pre-16S rRNA nuclease (142 aa).

This sequence belongs to the YqgF nuclease family.

The protein resides in the cytoplasm. Functionally, could be a nuclease involved in processing of the 5'-end of pre-16S rRNA. This is Putative pre-16S rRNA nuclease from Staphylococcus haemolyticus (strain JCSC1435).